We begin with the raw amino-acid sequence, 96 residues long: Large ribosomal subunit protein bL21 (96 aa).

Belongs to the bacterial ribosomal protein bL21 family. In terms of assembly, part of the 50S ribosomal subunit. Contacts protein L20.

Its function is as follows. This protein binds to 23S rRNA in the presence of protein L20. The sequence is that of Large ribosomal subunit protein bL21 from Sulfurihydrogenibium sp. (strain YO3AOP1).